Consider the following 238-residue polypeptide: ATP-dependent Clp protease ATP-binding subunit CLPT1, chloroplastic (238 aa).

The N-terminal 64 residues, 1–64 (MASYTVSFIP…VPKLRCLTSA (64 aa)), are a transit peptide targeting the chloroplast. The region spanning 83-228 (IPKWSARAIK…KEVEKSMNED (146 aa)) is the Clp R domain. Repeat regions lie at residues 86–151 (WSAR…LGKS) and 163–228 (LTEP…MNED).

This sequence belongs to the ClpA/ClpB family. As to quaternary structure, monomer and homodimer. Binds to the CLP3-6 ring (P-ring). The dimers monomerize before association to the P-ring. Component of the chloroplastic Clp protease core complex which consist of at least 16 proteins: CLPP4 (3 copies), CLPP5 (3 copies), CLPR4 (2 copies), ClpP1 (1 copy), CLPP6 (1 copy), CLPR2 (1 copy), CLPT1 (1 copy), CLPT2 (1 copy) and 3 copies of CLPP3 and/or CLPR1 and/or CLPR3. Interacts with CLPC2 and CLPD. Interacts with CPN21. No interactions with CLPS1.

Its subcellular location is the plastid. It localises to the chloroplast. Its function is as follows. Accessory protein regulating the assembly of the plastidial Clp protease system. CLPT1 first binds to the heptameric P-ring containing the CLP3-6 subunits followed by CLPT2, and only then does the P-ring combine with the R-ring composed of the clpP1 and CLPR1-4 subunits. Once the core complex is fully assembled, it then associates to the CLPC chaperone partner to form the functional protease. CLPT1 and CLPT2 are partially redundant. The polypeptide is ATP-dependent Clp protease ATP-binding subunit CLPT1, chloroplastic (Arabidopsis thaliana (Mouse-ear cress)).